A 392-amino-acid polypeptide reads, in one-letter code: Bifunctional enzyme Fae/Hps (392 aa).

The tract at residues 1–161 is formaldehyde-activating enzyme; the sequence is MFLVGEALIG…YEKERSVHPV (161 aa). The active-site Proton donor is the histidine 17. The substrate site is built by aspartate 19, leucine 48, lysine 66, threonine 68, and glutamine 83. The 3-hexulose-6-phosphate synthase stretch occupies residues 162-392; that stretch reads MGYRVMRLWD…IDQYRIMTDF (231 aa).

It in the N-terminal section; belongs to the formaldehyde-activating enzyme family. This sequence in the C-terminal section; belongs to the HPS/KGPDC family. HPS subfamily.

The catalysed reaction is 5,6,7,8-tetrahydromethanopterin + formaldehyde = 5,10-methylenetetrahydromethanopterin + H2O. It carries out the reaction D-ribulose 5-phosphate + formaldehyde = D-arabino-hex-3-ulose 6-phosphate. Its pathway is carbohydrate biosynthesis; D-ribose 5-phosphate biosynthesis. Functionally, catalyzes the condensation of formaldehyde with tetrahydromethanopterin (H(4)MPT) to 5,10-methylenetetrahydromethanopterin. Its function is as follows. Catalyzes the reversible formation of ribulose-5-phosphate and formaldehyde from 3-hexulose-6-phosphate. This Methanothrix thermoacetophila (strain DSM 6194 / JCM 14653 / NBRC 101360 / PT) (Methanosaeta thermophila) protein is Bifunctional enzyme Fae/Hps.